The chain runs to 255 residues: Cytosolic Fe-S cluster assembly factor Nubp2 homolog (255 aa).

14–21 (GKGGVGKS) contributes to the ATP binding site. Residues Cys-185 and Cys-188 each contribute to the [4Fe-4S] cluster site.

Belongs to the Mrp/NBP35 ATP-binding proteins family. NUBP2/CFD1 subfamily. Heterotetramer of 2 Nubp1 and 2 Nubp2 chains. [4Fe-4S] cluster is required as a cofactor.

It is found in the cytoplasm. Component of the cytosolic iron-sulfur (Fe/S) protein assembly (CIA) machinery. Required for maturation of extramitochondrial Fe-S proteins. The Nubp1-Nubp2 heterotetramer forms a Fe-S scaffold complex, mediating the de novo assembly of an Fe-S cluster and its transfer to target apoproteins. This chain is Cytosolic Fe-S cluster assembly factor Nubp2 homolog, found in Drosophila persimilis (Fruit fly).